We begin with the raw amino-acid sequence, 494 residues long: tRNA-2-methylthio-N(6)-dimethylallyladenosine synthase (494 aa).

One can recognise an MTTase N-terminal domain in the interval 5 to 121; sequence RTYQVRTYGC…LPALLERARV (117 aa). [4Fe-4S] cluster contacts are provided by Cys-14, Cys-50, Cys-84, Cys-158, Cys-162, and Cys-165. A Radical SAM core domain is found at 144-374; it reads RESVYAAWVA…LELQERISEE (231 aa). A TRAM domain is found at 377 to 446; sequence AKFVGREVEV…PHHLVADSGI (70 aa). Basic and acidic residues predominate over residues 458–468; sequence WEARNAPERRP. The segment at 458-494 is disordered; sequence WEARNAPERRPTGVLLGMPKVGAPEPQPSVVGGCCDS.

Belongs to the methylthiotransferase family. MiaB subfamily. Monomer. The cofactor is [4Fe-4S] cluster.

It localises to the cytoplasm. It carries out the reaction N(6)-dimethylallyladenosine(37) in tRNA + (sulfur carrier)-SH + AH2 + 2 S-adenosyl-L-methionine = 2-methylsulfanyl-N(6)-dimethylallyladenosine(37) in tRNA + (sulfur carrier)-H + 5'-deoxyadenosine + L-methionine + A + S-adenosyl-L-homocysteine + 2 H(+). Functionally, catalyzes the methylthiolation of N6-(dimethylallyl)adenosine (i(6)A), leading to the formation of 2-methylthio-N6-(dimethylallyl)adenosine (ms(2)i(6)A) at position 37 in tRNAs that read codons beginning with uridine. This chain is tRNA-2-methylthio-N(6)-dimethylallyladenosine synthase, found in Thermobifida fusca (strain YX).